A 449-amino-acid chain; its full sequence is Hyaluronidase-4 (449 aa).

The first 23 residues, 1 to 23 (MYHIWIKFLAAWIFLKRFNGVHV), serve as a signal peptide directing secretion. Intrachain disulfides connect cysteine 47–cysteine 340 and cysteine 211–cysteine 227. Residues asparagine 67, asparagine 103, and asparagine 111 are each glycosylated (N-linked (GlcNAc...) asparagine). Residue glutamate 135 is the Proton donor of the active site. N-linked (GlcNAc...) asparagine glycosylation occurs at asparagine 153. An N-linked (GlcNAc...) asparagine glycan is attached at asparagine 357. Intrachain disulfides connect cysteine 365-cysteine 376, cysteine 370-cysteine 427, and cysteine 429-cysteine 438. N-linked (GlcNAc...) asparagine glycosylation is present at asparagine 401. Positions 427 to 438 (CQCYQGWKGLYC) constitute an EGF-like domain.

Belongs to the glycosyl hydrolase 56 family. In terms of assembly, monomer. As to expression, expressed by the venom gland.

It is found in the secreted. It catalyses the reaction Random hydrolysis of (1-&gt;4)-linkages between N-acetyl-beta-D-glucosamine and D-glucuronate residues in hyaluronate.. Functionally, snake venom endo-hyaluronidase that degrades hyaluronan to smaller oligosaccharide fragments. In venom, it is not toxic by itself, but increases the diffusion of other venom proteins by degrading the extracellular matrix. In addition, it displays antiedematogenic activity. This chain is Hyaluronidase-4, found in Cerastes cerastes (Horned desert viper).